A 591-amino-acid chain; its full sequence is Probable Xaa-Pro aminopeptidase PEPP (591 aa).

Positions 31–59 (SIHSPPPSVSAATHGGVKNPSFSQRRTSG) are disordered. Asp322 and Asp333 together coordinate Mn(2+). The segment covering 441–450 (GLSRQAISGS) has biased composition (low complexity). A disordered region spans residues 441-460 (GLSRQAISGSRRLPPPRNMK). Residues Glu511 and Glu552 each coordinate Mn(2+).

This sequence belongs to the peptidase M24B family. Mn(2+) is required as a cofactor.

The enzyme catalyses Release of any N-terminal amino acid, including proline, that is linked to proline, even from a dipeptide or tripeptide.. Catalyzes the removal of a penultimate prolyl residue from the N-termini of peptides. This chain is Probable Xaa-Pro aminopeptidase PEPP (PEPP), found in Sordaria macrospora (strain ATCC MYA-333 / DSM 997 / K(L3346) / K-hell).